Here is a 413-residue protein sequence, read N- to C-terminus: Multifunctional CCA protein (413 aa).

Positions 8 and 11 each coordinate ATP. Residues Gly-8 and Arg-11 each contribute to the CTP site. Asp-21 and Asp-23 together coordinate Mg(2+). ATP contacts are provided by Arg-91, Arg-137, and Arg-140. The CTP site is built by Arg-91, Arg-137, and Arg-140. Residues 228–329 (TGVHTLMTLS…VKLFDAIDAW (102 aa)) enclose the HD domain.

This sequence belongs to the tRNA nucleotidyltransferase/poly(A) polymerase family. Bacterial CCA-adding enzyme type 1 subfamily. In terms of assembly, monomer. Can also form homodimers and oligomers. It depends on Mg(2+) as a cofactor. The cofactor is Ni(2+).

It catalyses the reaction a tRNA precursor + 2 CTP + ATP = a tRNA with a 3' CCA end + 3 diphosphate. The enzyme catalyses a tRNA with a 3' CCA end + 2 CTP + ATP = a tRNA with a 3' CCACCA end + 3 diphosphate. Catalyzes the addition and repair of the essential 3'-terminal CCA sequence in tRNAs without using a nucleic acid template. Adds these three nucleotides in the order of C, C, and A to the tRNA nucleotide-73, using CTP and ATP as substrates and producing inorganic pyrophosphate. tRNA 3'-terminal CCA addition is required both for tRNA processing and repair. Also involved in tRNA surveillance by mediating tandem CCA addition to generate a CCACCA at the 3' terminus of unstable tRNAs. While stable tRNAs receive only 3'-terminal CCA, unstable tRNAs are marked with CCACCA and rapidly degraded. This Salmonella paratyphi A (strain ATCC 9150 / SARB42) protein is Multifunctional CCA protein.